The following is a 457-amino-acid chain: NADH-ubiquinone oxidoreductase chain 4 (457 aa).

12 helical membrane-spanning segments follow: residues 22 to 42 (NLWP…IALI), 59 to 79 (SMQL…LIAS), 95 to 115 (IVLV…LELI), 116 to 136 (LFYI…TRWG), 148 to 168 (FIFY…ALYF), 191 to 211 (LTVW…IYGF), 223 to 243 (PVAG…YGLM), 257 to 277 (SSLP…IICI), 282 to 302 (LKAL…AGVF), 309 to 329 (INGA…LFAL), 350 to 370 (LILP…LGFP), and 433 to 453 (LFLL…LVLI).

It belongs to the complex I subunit 4 family.

It is found in the mitochondrion membrane. It catalyses the reaction a ubiquinone + NADH + 5 H(+)(in) = a ubiquinol + NAD(+) + 4 H(+)(out). In terms of biological role, core subunit of the mitochondrial membrane respiratory chain NADH dehydrogenase (Complex I) that is believed to belong to the minimal assembly required for catalysis. Complex I functions in the transfer of electrons from NADH to the respiratory chain. The immediate electron acceptor for the enzyme is believed to be ubiquinone. The sequence is that of NADH-ubiquinone oxidoreductase chain 4 (ND4) from Arbacia lixula (Black urchin).